Consider the following 176-residue polypeptide: Shikimate kinase (176 aa).

Position 14–19 (14–19 (GAGKSS)) interacts with ATP. A Mg(2+)-binding site is contributed by serine 18. The substrate site is built by aspartate 36, arginine 60, and glycine 82. Position 120 (arginine 120) interacts with ATP. Substrate is bound at residue arginine 138.

This sequence belongs to the shikimate kinase family. In terms of assembly, monomer. Mg(2+) is required as a cofactor.

It localises to the cytoplasm. It carries out the reaction shikimate + ATP = 3-phosphoshikimate + ADP + H(+). It participates in metabolic intermediate biosynthesis; chorismate biosynthesis; chorismate from D-erythrose 4-phosphate and phosphoenolpyruvate: step 5/7. Functionally, catalyzes the specific phosphorylation of the 3-hydroxyl group of shikimic acid using ATP as a cosubstrate. This is Shikimate kinase from Dehalococcoides mccartyi (strain ATCC BAA-2266 / KCTC 15142 / 195) (Dehalococcoides ethenogenes (strain 195)).